A 695-amino-acid chain; its full sequence is NADPH--cytochrome P450 reductase (695 aa).

The Lumenal portion of the chain corresponds to 1 to 8 (MAQLDTLD). The chain crosses the membrane as a helical span at residues 9–31 (IVVLVVLLVGSVAYFTKGSYWAV). Residues 32 to 695 (PKDPYAAANS…SGSYQEDVWS (664 aa)) are Cytoplasmic-facing. The region spanning 66-221 (CVIFYGSQTG…DFLAWKEPMW (156 aa)) is the Flavodoxin-like domain. FMN is bound by residues 72–77 (SQTGTA), 123–126 (ATYG), 169–178 (LGNNTYEHYN), and aspartate 204. The FAD-binding FR-type domain maps to 277–538 (HNPYIAPIVE…HVRHSNFKLP (262 aa)). Arginine 296 serves as a coordination point for NADP(+). Residues 451–454 (RYYS), 469–471 (TAV), and 486–489 (GVTT) contribute to the FAD site. NADP(+)-binding positions include threonine 552, 614–615 (SR), 620–624 (KVYVQ), and glutamate 656. Tryptophan 694 serves as a coordination point for FAD.

The protein belongs to the NADPH--cytochrome P450 reductase family. This sequence in the N-terminal section; belongs to the flavodoxin family. In the C-terminal section; belongs to the flavoprotein pyridine nucleotide cytochrome reductase family. FAD is required as a cofactor. Requires FMN as cofactor.

It is found in the endoplasmic reticulum membrane. Its subcellular location is the mitochondrion outer membrane. The protein resides in the cell membrane. It carries out the reaction 2 oxidized [cytochrome P450] + NADPH = 2 reduced [cytochrome P450] + NADP(+) + H(+). This enzyme is required for electron transfer from NADP to cytochrome P450 in microsomes. It can also provide electron transfer to heme oxygenase and cytochrome B5. Involved in ergosterol biosynthesis. This chain is NADPH--cytochrome P450 reductase, found in Aspergillus fumigatus (strain ATCC MYA-4609 / CBS 101355 / FGSC A1100 / Af293) (Neosartorya fumigata).